The chain runs to 479 residues: Chromosomal replication initiator protein DnaA (479 aa).

The interval 1–94 (MKGGTMVENA…QTLWRTERED (94 aa)) is domain I, interacts with DnaA modulators. Residues 94–142 (DIKGVELQVKRGLPEVSMGDAEDGEDGSGEGHELATQAAAPESRSDLAV) form a domain II region. Residues 106–137 (LPEVSMGDAEDGEDGSGEGHELATQAAAPESR) form a disordered region. Residues 143 to 359 (PLDPRFTFDT…GALNRLIAHA (217 aa)) form a domain III, AAA+ region region. Residues Gly-188, Gly-190, Lys-191, and Thr-192 each coordinate ATP. The tract at residues 360-479 (DLVGRPVTLD…VELLRRMLEG (120 aa)) is domain IV, binds dsDNA.

It belongs to the DnaA family. As to quaternary structure, oligomerizes as a right-handed, spiral filament on DNA at oriC.

The protein resides in the cytoplasm. In terms of biological role, plays an essential role in the initiation and regulation of chromosomal replication. ATP-DnaA binds to the origin of replication (oriC) to initiate formation of the DNA replication initiation complex once per cell cycle. Binds the DnaA box (a 9 base pair repeat at the origin) and separates the double-stranded (ds)DNA. Forms a right-handed helical filament on oriC DNA; dsDNA binds to the exterior of the filament while single-stranded (ss)DNA is stabiized in the filament's interior. The ATP-DnaA-oriC complex binds and stabilizes one strand of the AT-rich DNA unwinding element (DUE), permitting loading of DNA polymerase. After initiation quickly degrades to an ADP-DnaA complex that is not apt for DNA replication. Binds acidic phospholipids. The chain is Chromosomal replication initiator protein DnaA from Gluconobacter oxydans (strain 621H) (Gluconobacter suboxydans).